The following is a 435-amino-acid chain: Nuclear distribution protein nudF 2 (435 aa).

Residues Q9–E41 enclose the LisH domain. WD repeat units follow at residues S86–T125, G128–R171, G175–T214, G217–L256, A280–L320, G322–K361, T366–I396, and P397–A434.

This sequence belongs to the WD repeat LIS1/nudF family. As to quaternary structure, self-associates. Interacts with nudE and dynein.

The protein resides in the cytoplasm. It localises to the cytoskeleton. The protein localises to the spindle pole. Positively regulates the activity of the minus-end directed microtubule motor protein dynein. May enhance dynein-mediated microtubule sliding by targeting dynein to the microtubule plus end. Required for nuclear migration during vegetative growth as well as development. Required for retrograde early endosome (EE) transport from the hyphal tip. Required for localization of dynein to the mitotic spindle poles. Recruits additional proteins to the dynein complex at SPBs. This Aspergillus clavatus (strain ATCC 1007 / CBS 513.65 / DSM 816 / NCTC 3887 / NRRL 1 / QM 1276 / 107) protein is Nuclear distribution protein nudF 2.